Here is a 103-residue protein sequence, read N- to C-terminus: Pyrimidine/purine nucleoside phosphorylase (103 aa).

It belongs to the nucleoside phosphorylase PpnP family.

The enzyme catalyses a purine D-ribonucleoside + phosphate = a purine nucleobase + alpha-D-ribose 1-phosphate. The catalysed reaction is adenosine + phosphate = alpha-D-ribose 1-phosphate + adenine. It catalyses the reaction cytidine + phosphate = cytosine + alpha-D-ribose 1-phosphate. It carries out the reaction guanosine + phosphate = alpha-D-ribose 1-phosphate + guanine. The enzyme catalyses inosine + phosphate = alpha-D-ribose 1-phosphate + hypoxanthine. The catalysed reaction is thymidine + phosphate = 2-deoxy-alpha-D-ribose 1-phosphate + thymine. It catalyses the reaction uridine + phosphate = alpha-D-ribose 1-phosphate + uracil. It carries out the reaction xanthosine + phosphate = alpha-D-ribose 1-phosphate + xanthine. Functionally, catalyzes the phosphorolysis of diverse nucleosides, yielding D-ribose 1-phosphate and the respective free bases. Can use uridine, adenosine, guanosine, cytidine, thymidine, inosine and xanthosine as substrates. Also catalyzes the reverse reactions. The protein is Pyrimidine/purine nucleoside phosphorylase of Cupriavidus metallidurans (strain ATCC 43123 / DSM 2839 / NBRC 102507 / CH34) (Ralstonia metallidurans).